Consider the following 279-residue polypeptide: Undecaprenyl-diphosphatase (279 aa).

8 helical membrane-spanning segments follow: residues 17–37 (TEFLPVSSTGHLFLFSYFFPF), 46–66 (AFEDLFDIFIQTGAILSVVVL), 92–112 (FQFYLNLIVGILPILILGFLL), 123–143 (SDLLLILGMSWFVGGIIMVFV), 156–176 (IGFKESIIVGFLQCFALIPGV), 197–217 (AEFSFFLAIPVLTLAGIYKLY), 226–246 (ETIGLLLFGSIISFIICYFII), and 257–277 (SFISFGVYRILLGLLVILYFV).

This sequence belongs to the UppP family.

Its subcellular location is the cell inner membrane. It carries out the reaction di-trans,octa-cis-undecaprenyl diphosphate + H2O = di-trans,octa-cis-undecaprenyl phosphate + phosphate + H(+). In terms of biological role, catalyzes the dephosphorylation of undecaprenyl diphosphate (UPP). Confers resistance to bacitracin. This is Undecaprenyl-diphosphatase from Leptospira biflexa serovar Patoc (strain Patoc 1 / ATCC 23582 / Paris).